Here is a 67-residue protein sequence, read N- to C-terminus: Large ribosomal subunit protein bL31c (67 aa).

It belongs to the bacterial ribosomal protein bL31 family. Type A subfamily. Part of the 50S ribosomal subunit.

The protein resides in the plastid. Its subcellular location is the chloroplast. In terms of biological role, binds the 23S rRNA. The protein is Large ribosomal subunit protein bL31c (rpl31) of Cyanidioschyzon merolae (strain NIES-3377 / 10D) (Unicellular red alga).